A 418-amino-acid chain; its full sequence is Tyrosine--tRNA ligase (418 aa).

Residue Tyr-34 participates in L-tyrosine binding. Positions 39–48 (PTADSLHLGH) match the 'HIGH' region motif. L-tyrosine contacts are provided by Tyr-169 and Gln-173. The 'KMSKS' region motif lies at 229 to 233 (KFGKS). Lys-232 is an ATP binding site. The S4 RNA-binding domain maps to 352-418 (HNIVELLVTA…GKKKYFVLTY (67 aa)).

Belongs to the class-I aminoacyl-tRNA synthetase family. TyrS type 1 subfamily. Homodimer.

The protein localises to the cytoplasm. It carries out the reaction tRNA(Tyr) + L-tyrosine + ATP = L-tyrosyl-tRNA(Tyr) + AMP + diphosphate + H(+). Its function is as follows. Catalyzes the attachment of tyrosine to tRNA(Tyr) in a two-step reaction: tyrosine is first activated by ATP to form Tyr-AMP and then transferred to the acceptor end of tRNA(Tyr). The chain is Tyrosine--tRNA ligase from Streptococcus mutans serotype c (strain ATCC 700610 / UA159).